Reading from the N-terminus, the 104-residue chain is Major pilu subunit operon regulatory protein PapB (104 aa).

The protein resides in the cytoplasm. May act as both positive and negative regulator of pap transcription. Might positively regulate levels of papI and/or mbf. Its autoregulatory mode of action involves differential binding to separate sites. This chain is Major pilu subunit operon regulatory protein PapB (papB), found in Escherichia coli.